The following is a 408-amino-acid chain: Serine/threonine transporter SstT (408 aa).

Helical transmembrane passes span 14–34, 43–63, 83–103, 143–163, 181–201, 219–239, 247–269, 290–310, and 332–352; these read GNLILQICIGIVLGILIGIFS, IFGALFTGALKAIAPILVFIL, IIFLYIFGTFLASLSAVSISF, ALSSGNYLSILAWAIGGGFAL, VLKIVKFIVKLAPFGIFGLVA, LIILVLTMFFVAFVINALIVF, YPLIFICLKHSAVFAFFTRSSAA, ISIPLGATINMAGAAVTIAIL, and VLAAFAACGASGVAGGSLLLI.

It belongs to the dicarboxylate/amino acid:cation symporter (DAACS) (TC 2.A.23) family.

It localises to the cell inner membrane. It catalyses the reaction L-serine(in) + Na(+)(in) = L-serine(out) + Na(+)(out). It carries out the reaction L-threonine(in) + Na(+)(in) = L-threonine(out) + Na(+)(out). Involved in the import of serine and threonine into the cell, with the concomitant import of sodium (symport system). This chain is Serine/threonine transporter SstT, found in Campylobacter lari (strain RM2100 / D67 / ATCC BAA-1060).